A 739-amino-acid chain; its full sequence is Lysine decarboxylase (739 aa).

At Lys367 the chain carries N6-(pyridoxal phosphate)lysine. The segment covering 714–726 has biased composition (basic and acidic residues); it reads ADEPGDKPSDTVK. The tract at residues 714–739 is disordered; the sequence is ADEPGDKPSDTVKKAPGKKPSAAKKS. Residues 728 to 739 are compositionally biased toward basic residues; that stretch reads APGKKPSAAKKS.

This sequence belongs to the Orn/Lys/Arg decarboxylase class-I family. It depends on pyridoxal 5'-phosphate as a cofactor.

It is found in the cytoplasm. The catalysed reaction is L-lysine + H(+) = cadaverine + CO2. This chain is Lysine decarboxylase, found in Hafnia alvei.